The primary structure comprises 459 residues: Argininosuccinate lyase (459 aa).

Belongs to the lyase 1 family. Argininosuccinate lyase subfamily.

The protein resides in the cytoplasm. It carries out the reaction 2-(N(omega)-L-arginino)succinate = fumarate + L-arginine. The protein operates within amino-acid biosynthesis; L-arginine biosynthesis; L-arginine from L-ornithine and carbamoyl phosphate: step 3/3. The chain is Argininosuccinate lyase from Chromobacterium violaceum (strain ATCC 12472 / DSM 30191 / JCM 1249 / CCUG 213 / NBRC 12614 / NCIMB 9131 / NCTC 9757 / MK).